The primary structure comprises 329 residues: Glycerol-3-phosphate dehydrogenase [NAD(P)+] (329 aa).

Residues W11 and K101 each contribute to the NADPH site. 3 residues coordinate sn-glycerol 3-phosphate: K101, G132, and S134. A136 is a binding site for NADPH. 5 residues coordinate sn-glycerol 3-phosphate: K188, D241, S251, R252, and N253. K188 serves as the catalytic Proton acceptor. R252 is a binding site for NADPH. NADPH contacts are provided by V276 and E278.

Belongs to the NAD-dependent glycerol-3-phosphate dehydrogenase family.

Its subcellular location is the cytoplasm. It carries out the reaction sn-glycerol 3-phosphate + NAD(+) = dihydroxyacetone phosphate + NADH + H(+). The catalysed reaction is sn-glycerol 3-phosphate + NADP(+) = dihydroxyacetone phosphate + NADPH + H(+). Its pathway is membrane lipid metabolism; glycerophospholipid metabolism. Catalyzes the reduction of the glycolytic intermediate dihydroxyacetone phosphate (DHAP) to sn-glycerol 3-phosphate (G3P), the key precursor for phospholipid synthesis. In Phytoplasma australiense, this protein is Glycerol-3-phosphate dehydrogenase [NAD(P)+].